The following is a 185-amino-acid chain: MRVMGVDPGLTRCGLSVIESGQGRKVIALDVDVVRTPADEQLHRRLLIISDTVEHWMDTHRPDVIAIERVFANHNANTAMGTAQAGGVIALAAAKRDIDVHFHTPSEVKAAVTGNGRADKAQVTEMVTRILALQAKPTPADAADALALAICHCWRAPMIARMAAAEAMAAEARRKYQAKLKAARA.

Catalysis depends on residues Asp7, Glu68, and Asp141. Mg(2+)-binding residues include Asp7, Glu68, and Asp141.

It belongs to the RuvC family. Homodimer which binds Holliday junction (HJ) DNA. The HJ becomes 2-fold symmetrical on binding to RuvC with unstacked arms; it has a different conformation from HJ DNA in complex with RuvA. In the full resolvosome a probable DNA-RuvA(4)-RuvB(12)-RuvC(2) complex forms which resolves the HJ. Mg(2+) serves as cofactor.

It is found in the cytoplasm. The enzyme catalyses Endonucleolytic cleavage at a junction such as a reciprocal single-stranded crossover between two homologous DNA duplexes (Holliday junction).. Functionally, the RuvA-RuvB-RuvC complex processes Holliday junction (HJ) DNA during genetic recombination and DNA repair. Endonuclease that resolves HJ intermediates. Cleaves cruciform DNA by making single-stranded nicks across the HJ at symmetrical positions within the homologous arms, yielding a 5'-phosphate and a 3'-hydroxyl group; requires a central core of homology in the junction. The consensus cleavage sequence is 5'-(A/T)TT(C/G)-3'. Cleavage occurs on the 3'-side of the TT dinucleotide at the point of strand exchange. HJ branch migration catalyzed by RuvA-RuvB allows RuvC to scan DNA until it finds its consensus sequence, where it cleaves and resolves the cruciform DNA. This chain is Crossover junction endodeoxyribonuclease RuvC, found in Mycobacterium sp. (strain MCS).